The sequence spans 102 residues: Protein PAPPAS (102 aa).

Transmembrane regions (helical) follow at residues 13–33 (LFLT…FVKW) and 82–102 (IGSD…FFFF).

In terms of tissue distribution, expressed in placenta with lower expression in brain, kidney and testis.

It localises to the endoplasmic reticulum membrane. In Homo sapiens (Human), this protein is Protein PAPPAS (PAPPA-AS1).